The chain runs to 399 residues: Lipoyl synthase, mitochondrial (399 aa).

A mitochondrion-targeting transit peptide spans 1 to 14 (MALISRSCGAASRY). A compositionally biased stretch (low complexity) spans 39-52 (AASTSSSSSPSPST). Positions 39–60 (AASTSSSSSPSPSTHNDRKKDL) are disordered. [4Fe-4S] cluster contacts are provided by Cys-128, Cys-133, Cys-139, Cys-159, Cys-163, Cys-166, and Ser-374. The 220-residue stretch at 144–363 (EYATATATIM…EKVGQEMGFI (220 aa)) folds into the Radical SAM core domain.

The protein belongs to the radical SAM superfamily. Lipoyl synthase family. [4Fe-4S] cluster is required as a cofactor.

Its subcellular location is the mitochondrion. The catalysed reaction is [[Fe-S] cluster scaffold protein carrying a second [4Fe-4S](2+) cluster] + N(6)-octanoyl-L-lysyl-[protein] + 2 oxidized [2Fe-2S]-[ferredoxin] + 2 S-adenosyl-L-methionine + 4 H(+) = [[Fe-S] cluster scaffold protein] + N(6)-[(R)-dihydrolipoyl]-L-lysyl-[protein] + 4 Fe(3+) + 2 hydrogen sulfide + 2 5'-deoxyadenosine + 2 L-methionine + 2 reduced [2Fe-2S]-[ferredoxin]. It participates in protein modification; protein lipoylation via endogenous pathway; protein N(6)-(lipoyl)lysine from octanoyl-[acyl-carrier-protein]: step 2/2. Functionally, catalyzes the radical-mediated insertion of two sulfur atoms into the C-6 and C-8 positions of the octanoyl moiety bound to the lipoyl domains of lipoate-dependent enzymes, thereby converting the octanoylated domains into lipoylated derivatives. The chain is Lipoyl synthase, mitochondrial (lias) from Danio rerio (Zebrafish).